Reading from the N-terminus, the 369-residue chain is Glutamate 5-kinase (369 aa).

Lys-14 contributes to the ATP binding site. Substrate contacts are provided by Ser-54, Asp-141, and Asn-153. Residues Ser-173 to Asp-174 and Thr-215 to Lys-221 contribute to the ATP site. The region spanning Arg-277–Ala-355 is the PUA domain.

The protein belongs to the glutamate 5-kinase family.

It is found in the cytoplasm. It carries out the reaction L-glutamate + ATP = L-glutamyl 5-phosphate + ADP. It participates in amino-acid biosynthesis; L-proline biosynthesis; L-glutamate 5-semialdehyde from L-glutamate: step 1/2. Catalyzes the transfer of a phosphate group to glutamate to form L-glutamate 5-phosphate. The sequence is that of Glutamate 5-kinase from Salinispora arenicola (strain CNS-205).